A 424-amino-acid chain; its full sequence is Translation initiation factor 2 subunit gamma (424 aa).

The tr-type G domain occupies 23–220 (LPEVNIGLVG…AIEETIPTPE (198 aa)). Positions 32–39 (GHVDHGKT) are G1. Positions 35, 39, 60, and 62 each coordinate Mg(2+). 35-40 (DHGKTT) serves as a coordination point for GTP. The segment at 60 to 64 (GISIK) is G2. The interval 107-110 (DSPG) is G3. Residues 163 to 166 (NKID) and 198 to 200 (SAQ) contribute to the GTP site. The tract at residues 163–166 (NKID) is G4. A G5 region spans residues 198 to 200 (SAQ).

Belongs to the TRAFAC class translation factor GTPase superfamily. Classic translation factor GTPase family. EIF2G subfamily. Heterotrimer composed of an alpha, a beta and a gamma chain. The cofactor is Mg(2+).

It carries out the reaction GTP + H2O = GDP + phosphate + H(+). Functionally, eIF-2 functions in the early steps of protein synthesis by forming a ternary complex with GTP and initiator tRNA. The protein is Translation initiation factor 2 subunit gamma of Archaeoglobus fulgidus (strain ATCC 49558 / DSM 4304 / JCM 9628 / NBRC 100126 / VC-16).